Consider the following 133-residue polypeptide: Putative elongation factor 1-delta-like protein (133 aa).

Over residues 58 to 73 the composition is skewed to low complexity; the sequence is SLAGSLGPGASSGPSG. 2 disordered regions span residues 58–77 and 89–133; these read SLAG…DHSE and NQRD…TSRG. Residues 89 to 102 show a composition bias toward basic and acidic residues; sequence NQRDLAERAGEELA.

The protein belongs to the EF-1-beta/EF-1-delta family.

This chain is Putative elongation factor 1-delta-like protein (EEF1DP3), found in Homo sapiens (Human).